A 715-amino-acid chain; its full sequence is Probable serine/threonine-protein kinase MARK-B (715 aa).

The segment covering 24–37 (SCSSNSTTSSSSNS) has biased composition (low complexity). The segment at 24–65 (SCSSNSTTSSSSNSPKQNKVSPGYRNKPQQQQHKKGHKMGNY) is disordered. The 256-residue stretch at 65 to 320 (YLLGKTIGSG…LDEIKTHVWV (256 aa)) folds into the Protein kinase domain. Residues 71–79 (IGSGTSSKV) and Lys94 each bind ATP. Residue Asp187 is the Proton acceptor of the active site. Residues 335–344 (KVSDRLEKEQ) are compositionally biased toward basic and acidic residues. Disordered regions lie at residues 335–399 (KVSD…IPQN) and 446–530 (CSAP…HHST). Low complexity predominate over residues 345 to 368 (QQQTPQHQQTQQQLQPQSQLQQHS). Positions 381-399 (IGSNRPLNQSSPNLTIPQN) are enriched in polar residues. 2 stretches are compositionally biased toward low complexity: residues 451 to 478 (SPHS…LSVS) and 487 to 513 (SSNP…INTS). Basic residues predominate over residues 517 to 527 (QYHHHHHHQNH). The KA1 domain maps to 666–715 (LCPRNETINFEIEVCKVNGMDMYGIKFKRLSGDAWSYSSSCIKIVESLKL).

It belongs to the protein kinase superfamily. CAMK Ser/Thr protein kinase family. SNF1 subfamily.

The enzyme catalyses L-seryl-[protein] + ATP = O-phospho-L-seryl-[protein] + ADP + H(+). It carries out the reaction L-threonyl-[protein] + ATP = O-phospho-L-threonyl-[protein] + ADP + H(+). The polypeptide is Probable serine/threonine-protein kinase MARK-B (mrkB) (Dictyostelium discoideum (Social amoeba)).